A 270-amino-acid polypeptide reads, in one-letter code: tRNA pseudouridine synthase A (270 aa).

The active-site Nucleophile is Asp60. The interval 107–111 (FHARF) is RNA binding. Position 118 (Tyr118) interacts with substrate. The interval 168-172 (QCQSR) is interaction with tRNA.

Belongs to the tRNA pseudouridine synthase TruA family. In terms of assembly, homodimer.

The enzyme catalyses uridine(38/39/40) in tRNA = pseudouridine(38/39/40) in tRNA. Functionally, formation of pseudouridine at positions 38, 39 and 40 in the anticodon stem and loop of transfer RNAs. The chain is tRNA pseudouridine synthase A from Citrobacter koseri (strain ATCC BAA-895 / CDC 4225-83 / SGSC4696).